We begin with the raw amino-acid sequence, 279 residues long: Aldo-keto reductase Mvan_2161 (279 aa).

Tyr54 serves as the catalytic Proton donor. Positions 194, 196, 232, 234, 235, 240, 243, 244, and 270 each coordinate NADPH.

Belongs to the aldo/keto reductase family.

This is Aldo-keto reductase Mvan_2161 from Mycolicibacterium vanbaalenii (strain DSM 7251 / JCM 13017 / BCRC 16820 / KCTC 9966 / NRRL B-24157 / PYR-1) (Mycobacterium vanbaalenii).